A 375-amino-acid chain; its full sequence is Putative type I specificity subunit S.MpnORF638P (375 aa).

The protein belongs to the type-I restriction system S methylase family. As to quaternary structure, the methyltransferase is composed of M and S polypeptides.

In terms of biological role, the specificity (S) subunit of a type I methyltransferase (MTase); this subunit dictates DNA sequence specificity. The single R subunit has multiple frameshifts and is probably not expressed. This is Putative type I specificity subunit S.MpnORF638P from Mycoplasma pneumoniae (strain ATCC 29342 / M129 / Subtype 1) (Mycoplasmoides pneumoniae).